A 471-amino-acid chain; its full sequence is Indole-3-acetate beta-glucosyltransferase (471 aa).

The active-site Proton acceptor is the histidine 15. Residue histidine 15 participates in an anthocyanidin binding. Aspartate 107 (charge relay) is an active-site residue. Threonine 129, glutamine 344, histidine 359, tryptophan 362, asparagine 363, serine 364, glutamate 367, aspartate 383, and glutamine 384 together coordinate UDP-alpha-D-glucose.

It belongs to the UDP-glycosyltransferase family.

The catalysed reaction is (indol-3-yl)acetate + UDP-alpha-D-glucose = 1-O-(indol-3-ylacetyl)-beta-D-glucose + UDP. It participates in plant hormone metabolism; auxin conjugation. This is Indole-3-acetate beta-glucosyltransferase (IAGLU) from Zea mays (Maize).